Reading from the N-terminus, the 348-residue chain is 3-keto-steroid reductase (348 aa).

The NADP(+) site is built by leucine 18, threonine 41, and arginine 47. Catalysis depends on proton donor residues serine 180 and tyrosine 203. Residues tyrosine 203, lysine 207, and serine 238 each coordinate NADP(+). Residue lysine 207 is the Lowers pKa of active site Tyr of the active site.

Belongs to the short-chain dehydrogenases/reductases (SDR) family. ERG27 subfamily.

The catalysed reaction is a 3beta-hydroxysteroid + NADP(+) = a 3-oxosteroid + NADPH + H(+). It participates in steroid biosynthesis; zymosterol biosynthesis; zymosterol from lanosterol: step 5/6. Its function is as follows. Responsible for the reduction of the keto group on the C-3 of sterols. In Candida glabrata (strain ATCC 2001 / BCRC 20586 / JCM 3761 / NBRC 0622 / NRRL Y-65 / CBS 138) (Yeast), this protein is 3-keto-steroid reductase (ERG27).